Reading from the N-terminus, the 147-residue chain is Large ribosomal subunit protein uL13 (147 aa).

The protein belongs to the universal ribosomal protein uL13 family. As to quaternary structure, part of the 50S ribosomal subunit.

Functionally, this protein is one of the early assembly proteins of the 50S ribosomal subunit, although it is not seen to bind rRNA by itself. It is important during the early stages of 50S assembly. This Leuconostoc mesenteroides subsp. mesenteroides (strain ATCC 8293 / DSM 20343 / BCRC 11652 / CCM 1803 / JCM 6124 / NCDO 523 / NBRC 100496 / NCIMB 8023 / NCTC 12954 / NRRL B-1118 / 37Y) protein is Large ribosomal subunit protein uL13.